The primary structure comprises 626 residues: Endo-1,3(4)-beta-glucanase xgeA (626 aa).

An N-terminal signal peptide occupies residues 1-25 (MSSSLMRRVGSLAASAIIFPGIAHA). In terms of domain architecture, GH16 spans 33-286 (ESWEGEKILN…WAGGVFGDSG (254 aa)). N-linked (GlcNAc...) asparagine glycosylation occurs at Asn-61. Residue Glu-142 is the Nucleophile of the active site. Residue Glu-147 is the Proton donor of the active site. Low complexity predominate over residues 477–494 (ASTDAAAATTPAAEPHPS). Residues 477–533 (ASTDAAAATTPAAEPHPSNAETPADSKSSADAVTAQATKTTIAVNTPNPATDSASSV) are disordered. Polar residues predominate over residues 495–533 (NAETPADSKSSADAVTAQATKTTIAVNTPNPATDSASSV). Gly-603 carries the GPI-anchor amidated glycine lipid modification. Residues 604-626 (VGSKVSISASVAIAAFVMLLLVN) constitute a propeptide, removed in mature form.

This sequence belongs to the glycosyl hydrolase 16 family.

The protein localises to the cell membrane. The enzyme catalyses Endohydrolysis of (1-&gt;3)- or (1-&gt;4)-linkages in beta-D-glucans when the glucose residue whose reducing group is involved in the linkage to be hydrolyzed is itself substituted at C-3.. Functionally, mixed-linked glucanase involved in the degradation of complex natural cellulosic substrates. Active on laminarin. lichenan, soluble carboxymethyl cellulose but not on pustulan. The protein is Endo-1,3(4)-beta-glucanase xgeA (xgeA) of Emericella nidulans (strain FGSC A4 / ATCC 38163 / CBS 112.46 / NRRL 194 / M139) (Aspergillus nidulans).